The following is a 349-amino-acid chain: 5,10-methylenetetrahydromethanopterin reductase (349 aa).

This sequence belongs to the mer family. As to quaternary structure, homotetramer composed of two loosely associated dimers.

The protein resides in the cytoplasm. The enzyme catalyses 5-methyl-5,6,7,8-tetrahydromethanopterin + oxidized coenzyme F420-(gamma-L-Glu)(n) + H(+) = 5,10-methylenetetrahydromethanopterin + reduced coenzyme F420-(gamma-L-Glu)(n). It functions in the pathway one-carbon metabolism; methanogenesis from CO(2); methyl-coenzyme M from 5,10-methylene-5,6,7,8-tetrahydromethanopterin: step 1/2. Its activity is regulated as follows. Requires the presence of relatively high concentrations of either sulfate or phosphate for maximal activity. Its function is as follows. Catalyzes the reversible reduction of methylene-H(4)MPT to methyl-H(4)MPT. This chain is 5,10-methylenetetrahydromethanopterin reductase, found in Methanopyrus kandleri (strain AV19 / DSM 6324 / JCM 9639 / NBRC 100938).